The primary structure comprises 79 residues: DNA gyrase inhibitor YacG (79 aa).

Residues cysteine 7, cysteine 10, cysteine 26, and cysteine 30 each contribute to the Zn(2+) site.

The protein belongs to the DNA gyrase inhibitor YacG family. In terms of assembly, interacts with GyrB. It depends on Zn(2+) as a cofactor.

Functionally, inhibits all the catalytic activities of DNA gyrase by preventing its interaction with DNA. Acts by binding directly to the C-terminal domain of GyrB, which probably disrupts DNA binding by the gyrase. The protein is DNA gyrase inhibitor YacG of Shewanella halifaxensis (strain HAW-EB4).